The sequence spans 96 residues: Methanol dehydrogenase [cytochrome c] subunit 2 (96 aa).

The N-terminal stretch at 1–22 (MKTTLIAAAIVALSGLAAPALA) is a signal peptide. Residues Cys28 and Cys34 are joined by a disulfide bond. The segment at 45-75 (IAGSKYDPKHDPKELNKQADSIKQMEERNKK) is disordered. Residues 50-61 (YDPKHDPKELNK) are compositionally biased toward basic and acidic residues.

The protein belongs to the methanol dehydrogenase subunit 2 family. Heterotetramer composed of 2 alpha and 2 beta subunits.

Its subcellular location is the periplasm. The catalysed reaction is 2 Fe(III)-[cytochrome cL] + a primary alcohol = 2 Fe(II)-[cytochrome cL] + an aldehyde + 2 H(+). Catalyzes the oxidation of primary alcohols including methanol. In Methylorubrum extorquens (strain ATCC 14718 / DSM 1338 / JCM 2805 / NCIMB 9133 / AM1) (Methylobacterium extorquens), this protein is Methanol dehydrogenase [cytochrome c] subunit 2 (moxI).